The primary structure comprises 213 residues: MITNSLQKTKVKICGIKDLEIAKICKEEGADYIGFNFVSSSPRKIELSNAQKIVEYYKSEKNSPEIVLLFYQNSFEEIESITSVLDHDLVQWVWDDPLINRKKLLYKRQICSYRVQTQIHDQDLKDIEAEFLILDSYSKGVGGGTGETFNWELISKVKRKFLLAGGLDPSNVVNAIEIVKPFGVDVASGVESSPGIKDPQKVIQFIRNVKSTS.

It belongs to the TrpF family.

It carries out the reaction N-(5-phospho-beta-D-ribosyl)anthranilate = 1-(2-carboxyphenylamino)-1-deoxy-D-ribulose 5-phosphate. Its pathway is amino-acid biosynthesis; L-tryptophan biosynthesis; L-tryptophan from chorismate: step 3/5. This is N-(5'-phosphoribosyl)anthranilate isomerase from Leptospira interrogans serogroup Icterohaemorrhagiae serovar copenhageni (strain Fiocruz L1-130).